Reading from the N-terminus, the 214-residue chain is Adenylate kinase (214 aa).

Residue 10–15 coordinates ATP; the sequence is GTGKGT. An NMP region spans residues 30-59; sequence STGDILRENIQKKNTIGKKIHNILKNGELV. Residues threonine 31, arginine 36, 57 to 59, 85 to 88, and glutamine 92 each bind AMP; these read ELV and GFPR. The LID stretch occupies residues 122–159; sequence GRRVHTPSGRIYNINYNPPREEGKDDLTQEKLTIREDD. Residues arginine 123 and 132 to 133 contribute to the ATP site; that span reads IY. AMP-binding residues include arginine 156 and arginine 167. Residue glutamine 200 coordinates ATP.

The protein belongs to the adenylate kinase family. Monomer.

The protein resides in the cytoplasm. The catalysed reaction is AMP + ATP = 2 ADP. Its pathway is purine metabolism; AMP biosynthesis via salvage pathway; AMP from ADP: step 1/1. Catalyzes the reversible transfer of the terminal phosphate group between ATP and AMP. Plays an important role in cellular energy homeostasis and in adenine nucleotide metabolism. The chain is Adenylate kinase from Buchnera aphidicola subsp. Schizaphis graminum (strain Sg).